The following is a 55-amino-acid chain: Large ribosomal subunit protein bL33 (55 aa).

The protein belongs to the bacterial ribosomal protein bL33 family.

The sequence is that of Large ribosomal subunit protein bL33 from Xanthomonas axonopodis pv. citri (strain 306).